Here is a 487-residue protein sequence, read N- to C-terminus: 2-aminomuconic semialdehyde dehydrogenase (487 aa).

231-236 (GSQPTA) provides a ligand contact to NAD(+). Glu-253 (proton acceptor) is an active-site residue. The active-site Nucleophile is Cys-287.

This sequence belongs to the aldehyde dehydrogenase family.

The protein localises to the cytoplasm. It catalyses the reaction 2-aminomuconate 6-semialdehyde + NAD(+) + H2O = (2Z,4E)-2-aminomuconate + NADH + 2 H(+). It functions in the pathway amino-acid degradation; L-kynurenine degradation. Its function is as follows. Catalyzes the NAD-dependent oxidation of 2-aminomuconic semialdehyde of the kynurenine metabolic pathway in L-tryptophan degradation. The protein is 2-aminomuconic semialdehyde dehydrogenase (ALDH8A1) of Bos taurus (Bovine).